We begin with the raw amino-acid sequence, 83 residues long: Putative membrane protein insertion efficiency factor (83 aa).

The tract at residues 62 to 83 is disordered; sequence KGGYDPVPPKSVKSAGNSKDSK.

It belongs to the UPF0161 family.

The protein localises to the cell inner membrane. Could be involved in insertion of integral membrane proteins into the membrane. The chain is Putative membrane protein insertion efficiency factor from Chlorobaculum tepidum (strain ATCC 49652 / DSM 12025 / NBRC 103806 / TLS) (Chlorobium tepidum).